A 622-amino-acid polypeptide reads, in one-letter code: Membrane protein insertase YidC (622 aa).

Residues 6 to 26 (FIAVVLSVLVLVGASFLQELL) form a helical membrane-spanning segment. Residues 37–71 (AEHTLSAVPEETRTQSAHGGAADTQETTQPAAHPS) are disordered. A run of 4 helical transmembrane segments spans residues 413-433 (LIPN…VLFF), 483-503 (LSGC…YRLF), 513-533 (MFIP…TLPF), and 579-599 (VMPL…LVYW).

Belongs to the OXA1/ALB3/YidC family. Type 1 subfamily. In terms of assembly, interacts with the Sec translocase complex via SecD. Specifically interacts with transmembrane segments of nascent integral membrane proteins during membrane integration.

It is found in the cell inner membrane. Functionally, required for the insertion and/or proper folding and/or complex formation of integral membrane proteins into the membrane. Involved in integration of membrane proteins that insert both dependently and independently of the Sec translocase complex, as well as at least some lipoproteins. Aids folding of multispanning membrane proteins. The polypeptide is Membrane protein insertase YidC (Treponema pallidum (strain Nichols)).